The primary structure comprises 201 residues: Recombination protein RecR (201 aa).

A C4-type zinc finger spans residues 57 to 72; that stretch reads CADCRTFTEQPVCTIC. One can recognise a Toprim domain in the interval 81–176; sequence GQICVVESPA…MASRIAHGVP (96 aa).

It belongs to the RecR family.

Functionally, may play a role in DNA repair. It seems to be involved in an RecBC-independent recombinational process of DNA repair. It may act with RecF and RecO. In Sodalis glossinidius (strain morsitans), this protein is Recombination protein RecR.